The primary structure comprises 86 residues: UPF0297 protein SAHV_1604 (86 aa).

This sequence belongs to the UPF0297 family.

This chain is UPF0297 protein SAHV_1604, found in Staphylococcus aureus (strain Mu3 / ATCC 700698).